The primary structure comprises 64 residues: MADVRPENNESFESMLKRFNRKVQQDGILSEARRRTRFERPPTRRKRKDAAKRRLAIKAARKAT.

The interval 26-64 is disordered; sequence DGILSEARRRTRFERPPTRRKRKDAAKRRLAIKAARKAT. Residues 43–64 show a composition bias toward basic residues; the sequence is TRRKRKDAAKRRLAIKAARKAT.

It belongs to the bacterial ribosomal protein bS21 family.

The protein is Small ribosomal subunit protein bS21 of Dehalococcoides mccartyi (strain ATCC BAA-2100 / JCM 16839 / KCTC 5957 / BAV1).